Here is a 976-residue protein sequence, read N- to C-terminus: Vacuolar membrane protease (976 aa).

At 1 to 15 the chain is on the cytoplasmic side; sequence MKLKSVFRSVLKYRK. A helical membrane pass occupies residues 16–36; that stretch reads TNLSLLLLITYSIITLLYIFD. At 37 to 359 the chain is on the vacuolar side; the sequence is HERYKLNLPK…KFFVISAKTL (323 aa). N96 and N121 each carry an N-linked (GlcNAc...) asparagine glycan. Positions 156 and 168 each coordinate Zn(2+). N189 is a glycosylation site (N-linked (GlcNAc...) asparagine). The active-site Proton acceptor is the E200. E201 serves as a coordination point for Zn(2+). Residues N212 and N217 are each glycosylated (N-linked (GlcNAc...) asparagine). 2 residues coordinate Zn(2+): E226 and H300. A helical membrane pass occupies residues 360–380; the sequence is FYWNCIFLLVSPVVAIGLYLI. The Cytoplasmic portion of the chain corresponds to 381–392; the sequence is SRDRMTWKSHSW. The helical transmembrane segment at 393–412 threads the bilayer; it reads LSWTRFPLSLAAGIIVQKLF. At 413–428 the chain is on the vacuolar side; sequence SNDIIRSNPLTFSRNY. The chain crosses the membrane as a helical span at residues 429 to 449; that stretch reads FWPISAFFTQVIFTSYVLINC. Residues 450–461 are Cytoplasmic-facing; it reads SNFFFPCADMKS. Residues 462–482 traverse the membrane as a helical segment; the sequence is LSIIELFIILWTILLFTSKLL. Residues 483–496 are Vacuolar-facing; that stretch reads YSSDYRYTGLYPLS. A helical transmembrane segment spans residues 497–517; sequence IFFLLSTIAAILRLLALALGM. The Cytoplasmic segment spans residues 518 to 627; sequence RTRKRLGREC…NSLKLEYTDY (110 aa). The disordered stretch occupies residues 528-610; the sequence is RDHHSNYSSH…PLLKGSNSME (83 aa). A compositionally biased stretch (polar residues) spans 549-558; sequence NLEQPQDQFT. Residues 559-570 are compositionally biased toward low complexity; sequence SSQDDQASIQDD. A compositionally biased stretch (basic and acidic residues) spans 582–601; the sequence is NVDEDHGMDSSSQQHDERVP. A helical membrane pass occupies residues 628 to 648; sequence AWIIQFLLIVPIPSFILFNSV. Over 649-668 the chain is Vacuolar; sequence DVIMDALNHTVQEGSKATFD. Residue N656 is glycosylated (N-linked (GlcNAc...) asparagine). A helical transmembrane segment spans residues 669–689; the sequence is VLRFGMVGSILMALPILPFFY. The Cytoplasmic segment spans residues 690 to 692; that stretch reads KVN. A helical membrane pass occupies residues 693-713; the sequence is YITISLTALLFLISASKTLLV. Residues 714–976 lie on the Vacuolar side of the membrane; sequence HPFTNSNPLK…LVIVKDAIIL (263 aa). Residues N768, N796, N811, N866, and N937 are each glycosylated (N-linked (GlcNAc...) asparagine).

Belongs to the peptidase M28 family. Zn(2+) is required as a cofactor.

The protein localises to the vacuole membrane. May be involved in vacuolar sorting and osmoregulation. The protein is Vacuolar membrane protease of Saccharomyces cerevisiae (strain AWRI1631) (Baker's yeast).